A 465-amino-acid chain; its full sequence is MSQGKVVQCIGAVVDVEFPRDQMPKVYDALILDEDSPTVEAGLTLEVQQQLGDGVVRTIAMGSSDGLSRGMKVKNTGSQIQVPVGHGTLGRIMDVLGRPIDEAGPIEADEKRSIHQKAPTFEELSPSVDLLETGIKVIDLVCPFAKGGKVGLFGGAGVGKTVNMMELINNIAKQHSGLSVFAGVGERTREGNDFYHEMKDSNVLDKVGMVFGQMNEPPGNRLRVALTGLTMAERFRDEGRDILFFVDNIYRYTLAGTEVSALLGRMPSAVGYQPTLAEEMGRLQERITSTKVGSITSIQAVYVPADDLTDPSPATTFLHLDSTVVLSRDIAALGIYPAVDPLDSTSRQLDPQIVGEEHYSVARAVQSTLQRYKELRDIIAILGMDELSPEDKLAVARARKIQRFLSQPFHVAEVFTGAPGKYVPLKDTIKGFKAIVNGEYDHLPEQAFYMVGSIEEAVEKAKTLN.

An ATP-binding site is contributed by 154–161 (GGAGVGKT).

Belongs to the ATPase alpha/beta chains family. As to quaternary structure, F-type ATPases have 2 components, CF(1) - the catalytic core - and CF(0) - the membrane proton channel. CF(1) has five subunits: alpha(3), beta(3), gamma(1), delta(1), epsilon(1). CF(0) has three main subunits: a(1), b(2) and c(9-12). The alpha and beta chains form an alternating ring which encloses part of the gamma chain. CF(1) is attached to CF(0) by a central stalk formed by the gamma and epsilon chains, while a peripheral stalk is formed by the delta and b chains.

The protein localises to the cell inner membrane. The enzyme catalyses ATP + H2O + 4 H(+)(in) = ADP + phosphate + 5 H(+)(out). Functionally, produces ATP from ADP in the presence of a proton gradient across the membrane. The catalytic sites are hosted primarily by the beta subunits. The polypeptide is ATP synthase subunit beta (Methylobacillus flagellatus (strain ATCC 51484 / DSM 6875 / VKM B-1610 / KT)).